We begin with the raw amino-acid sequence, 233 residues long: Large ribosomal subunit protein uL1 (233 aa).

This sequence belongs to the universal ribosomal protein uL1 family. In terms of assembly, part of the 50S ribosomal subunit.

Its function is as follows. Binds directly to 23S rRNA. The L1 stalk is quite mobile in the ribosome, and is involved in E site tRNA release. Protein L1 is also a translational repressor protein, it controls the translation of the L11 operon by binding to its mRNA. This chain is Large ribosomal subunit protein uL1, found in Campylobacter curvus (strain 525.92).